Reading from the N-terminus, the 451-residue chain is DNA double-strand break repair nuclease NurA (451 aa).

Mn(2+) is bound by residues D51 and D126.

This sequence belongs to the NurA family. Homodimer. Interacts with HerA. It depends on Mn(2+) as a cofactor.

Its activity is regulated as follows. Exonuclease activity is stimulated in the presence of HerA. In terms of biological role, involved in DNA double-strand break (DSB) repair. Probably acts with HerA to stimulate resection of the 5' strand and produce the long 3' single-strand that is required for RadA loading. Exhibits 5' endonuclease activity and both 5' and 3' exonuclease activities. The protein is DNA double-strand break repair nuclease NurA of Pyrococcus furiosus (strain ATCC 43587 / DSM 3638 / JCM 8422 / Vc1).